The chain runs to 181 residues: CDP-diacylglycerol--glycerol-3-phosphate 3-phosphatidyltransferase (181 aa).

4 helical membrane-spanning segments follow: residues 8–28 (PNYLTIARIMVIPVIILAFYI), 35–55 (KLGALLFVLASITDFFDGYIA), 64–84 (FGKMFDPIADKLLIGCVIIML), and 148–168 (IIYLDIVGEIILWIAAFLTII).

This sequence belongs to the CDP-alcohol phosphatidyltransferase class-I family.

It is found in the cell membrane. It carries out the reaction a CDP-1,2-diacyl-sn-glycerol + sn-glycerol 3-phosphate = a 1,2-diacyl-sn-glycero-3-phospho-(1'-sn-glycero-3'-phosphate) + CMP + H(+). The protein operates within phospholipid metabolism; phosphatidylglycerol biosynthesis; phosphatidylglycerol from CDP-diacylglycerol: step 1/2. Its function is as follows. This protein catalyzes the committed step to the synthesis of the acidic phospholipids. The protein is CDP-diacylglycerol--glycerol-3-phosphate 3-phosphatidyltransferase (pgsA) of Rickettsia felis (strain ATCC VR-1525 / URRWXCal2) (Rickettsia azadi).